A 284-amino-acid chain; its full sequence is Efem/EfeO family lipoprotein (284 aa).

Residues 1–17 (MKKLTTLLLASTLLIAA) form the signal peptide. Residue Cys-18 is the site of N-palmitoyl cysteine attachment. A lipid anchor (S-diacylglycerol cysteine) is attached at Cys-18.

The protein belongs to the EfeM/EfeO family.

The protein resides in the cell membrane. The chain is Efem/EfeO family lipoprotein from Staphylococcus aureus (strain MRSA252).